A 126-amino-acid polypeptide reads, in one-letter code: Ribosome-binding factor A (126 aa).

It belongs to the RbfA family. In terms of assembly, monomer. Binds 30S ribosomal subunits, but not 50S ribosomal subunits or 70S ribosomes.

The protein resides in the cytoplasm. Functionally, one of several proteins that assist in the late maturation steps of the functional core of the 30S ribosomal subunit. Associates with free 30S ribosomal subunits (but not with 30S subunits that are part of 70S ribosomes or polysomes). Required for efficient processing of 16S rRNA. May interact with the 5'-terminal helix region of 16S rRNA. The chain is Ribosome-binding factor A from Halorhodospira halophila (strain DSM 244 / SL1) (Ectothiorhodospira halophila (strain DSM 244 / SL1)).